The sequence spans 290 residues: MAFVSMKELLEDAKREQYAIGQFNINGLQWTKAILQAAQKEQSPVIAAASDRLVDYLGGFKTIAAMVGALIEDMAITVPVVLHLDHGSSAERCRQAIDAGFSSVMIDGSHQPIDENIAMTKEVTDYAAKHGVSVEAEVGTVGGMEDGLVGGVRYADITECERIVKETNIDALAAALGSVHGKYQGEPNLGFKEMEAISRMTDIPLVLHGASGIPQDQIKKAITLGHAKININTECMVAWTDETRRMFQENSDLYEPRGYLTPGIEAVEETVRSKMREFGSAGKAAKQQVG.

D85 (proton donor) is an active-site residue. The Zn(2+) site is built by H86 and H180. G181 lines the dihydroxyacetone phosphate pocket. H208 lines the Zn(2+) pocket. Residues 209–211 (GAS) and 230–233 (NINT) contribute to the dihydroxyacetone phosphate site. T233 is subject to Phosphothreonine.

The protein belongs to the class II fructose-bisphosphate aldolase family. IolJ subfamily. Zn(2+) serves as cofactor.

The enzyme catalyses 6-phospho-5-dehydro-2-deoxy-D-gluconate = 3-oxopropanoate + dihydroxyacetone phosphate. It functions in the pathway polyol metabolism; myo-inositol degradation into acetyl-CoA; acetyl-CoA from myo-inositol: step 6/7. Produces dihydroxyacetone phosphate (DHAP or glycerone phosphate) and malonic semialdehyde (MSA or 3-oxopropanoate) from 6-phospho-5-dehydro-2-deoxy-D-gluconate (DKGP). The protein is 6-phospho-5-dehydro-2-deoxy-D-gluconate aldolase (iolJ) of Bacillus subtilis (strain 168).